The following is a 172-amino-acid chain: Transcriptional repressor NrdR (172 aa).

A zinc finger lies at Cys3 to Cys34. The 91-residue stretch at Thr49 to Asp139 folds into the ATP-cone domain.

It belongs to the NrdR family. It depends on Zn(2+) as a cofactor.

Negatively regulates transcription of bacterial ribonucleotide reductase nrd genes and operons by binding to NrdR-boxes. The protein is Transcriptional repressor NrdR of Gloeobacter violaceus (strain ATCC 29082 / PCC 7421).